The sequence spans 562 residues: Probable sesquiterpene synthase (562 aa).

Residues Asp315, Asp319, and Glu467 each contribute to the Mg(2+) site. Residues 315-319 (DDIYD) carry the DDXXD motif motif.

This sequence belongs to the terpene synthase family. Tpsa subfamily. The cofactor is Mg(2+). Requires Mn(2+) as cofactor.

In terms of biological role, sesquiterpene synthase. The sequence is that of Probable sesquiterpene synthase (STPS) from Santalum murrayanum (Bitter quandong).